The chain runs to 143 residues: Sporulation-specific cell division protein SsgB (143 aa).

This sequence belongs to the SsgA family. In terms of assembly, interacts with SsgA. Interacts with FtsZ (via N-terminus).

The protein resides in the cell septum. Functionally, involved in sporulation-specific cell division. Required for early stages of sporulation. Important in the process of growth cessation prior to sporulation-specific cell division. Recruits cell division protein FtsZ to the future septum sites and tethers the contractile ring structure (Z ring) to the cytoplasmic membrane during sporulation. Stimulates polymerization and filament length of FtsZ in vitro. In Salinispora tropica (strain ATCC BAA-916 / DSM 44818 / JCM 13857 / NBRC 105044 / CNB-440), this protein is Sporulation-specific cell division protein SsgB.